The primary structure comprises 132 residues: Small ribosomal subunit protein uS8 (132 aa).

Belongs to the universal ribosomal protein uS8 family. In terms of assembly, part of the 30S ribosomal subunit. Contacts proteins S5 and S12.

Functionally, one of the primary rRNA binding proteins, it binds directly to 16S rRNA central domain where it helps coordinate assembly of the platform of the 30S subunit. This is Small ribosomal subunit protein uS8 from Xylella fastidiosa (strain M12).